Reading from the N-terminus, the 157-residue chain is SsrA-binding protein (157 aa).

The disordered stretch occupies residues 132-157; that stretch reads VHDKRQAQKDKDWAREKDRLFKKAYK. Residues 135 to 157 are compositionally biased toward basic and acidic residues; the sequence is KRQAQKDKDWAREKDRLFKKAYK.

The protein belongs to the SmpB family.

Its subcellular location is the cytoplasm. Functionally, required for rescue of stalled ribosomes mediated by trans-translation. Binds to transfer-messenger RNA (tmRNA), required for stable association of tmRNA with ribosomes. tmRNA and SmpB together mimic tRNA shape, replacing the anticodon stem-loop with SmpB. tmRNA is encoded by the ssrA gene; the 2 termini fold to resemble tRNA(Ala) and it encodes a 'tag peptide', a short internal open reading frame. During trans-translation Ala-aminoacylated tmRNA acts like a tRNA, entering the A-site of stalled ribosomes, displacing the stalled mRNA. The ribosome then switches to translate the ORF on the tmRNA; the nascent peptide is terminated with the 'tag peptide' encoded by the tmRNA and targeted for degradation. The ribosome is freed to recommence translation, which seems to be the essential function of trans-translation. The polypeptide is SsrA-binding protein (Francisella tularensis subsp. tularensis (strain FSC 198)).